The primary structure comprises 198 residues: MAQKKEEAAATPAAPTAARLQTLYHEKVVSALTERFKYDNVMNVPKLKKISINIGVGEAASEPKLLETALQELSQITGQKPQIRKSKKAISNFKLREGQAIGCRVTLRRKAMYEFFDRFVSIAVPRIRDFRGLPDTSFDGRGNYTVGVREQIIFPEIDIDKVPRIQGMDISFVTSATTDEEAFVLLTELGMPFKKKNN.

It belongs to the universal ribosomal protein uL5 family. In terms of assembly, part of the 50S ribosomal subunit; part of the 5S rRNA/L5/L18/L25 subcomplex. Contacts the 5S rRNA and the P site tRNA. Forms a bridge to the 30S subunit in the 70S ribosome.

Functionally, this is one of the proteins that bind and probably mediate the attachment of the 5S RNA into the large ribosomal subunit, where it forms part of the central protuberance. In the 70S ribosome it contacts protein S13 of the 30S subunit (bridge B1b), connecting the 2 subunits; this bridge is implicated in subunit movement. Contacts the P site tRNA; the 5S rRNA and some of its associated proteins might help stabilize positioning of ribosome-bound tRNAs. The polypeptide is Large ribosomal subunit protein uL5 (Chlorobium phaeovibrioides (strain DSM 265 / 1930) (Prosthecochloris vibrioformis (strain DSM 265))).